The primary structure comprises 154 residues: MRGTGTHLIAKNRKAFFNYHVEDRLECGIALEGTEVKSVRAGHLSFPDAFAEMRGGELWLKNVHIAEYVHACSFAPNPDRMRKLLAHRDQIARLKRKVEEKGYTLVPLEFYLKAGRVKVALGICKGKKLFDKRAQIKARDNARELSRSLCERHH.

This sequence belongs to the SmpB family.

It localises to the cytoplasm. Its function is as follows. Required for rescue of stalled ribosomes mediated by trans-translation. Binds to transfer-messenger RNA (tmRNA), required for stable association of tmRNA with ribosomes. tmRNA and SmpB together mimic tRNA shape, replacing the anticodon stem-loop with SmpB. tmRNA is encoded by the ssrA gene; the 2 termini fold to resemble tRNA(Ala) and it encodes a 'tag peptide', a short internal open reading frame. During trans-translation Ala-aminoacylated tmRNA acts like a tRNA, entering the A-site of stalled ribosomes, displacing the stalled mRNA. The ribosome then switches to translate the ORF on the tmRNA; the nascent peptide is terminated with the 'tag peptide' encoded by the tmRNA and targeted for degradation. The ribosome is freed to recommence translation, which seems to be the essential function of trans-translation. The sequence is that of SsrA-binding protein from Treponema pallidum (strain Nichols).